The chain runs to 351 residues: Methionine import ATP-binding protein MetN (351 aa).

The 246-residue stretch at 2–247 folds into the ABC transporter domain; sequence ITTSGLTKVY…PGSELAAALF (246 aa). Position 38–45 (38–45) interacts with ATP; the sequence is GQSGAGKS.

This sequence belongs to the ABC transporter superfamily. Methionine importer (TC 3.A.1.24) family. In terms of assembly, the complex is composed of two ATP-binding proteins (MetN), two transmembrane proteins (MetI) and a solute-binding protein (MetQ).

Its subcellular location is the cell membrane. It carries out the reaction L-methionine(out) + ATP + H2O = L-methionine(in) + ADP + phosphate + H(+). It catalyses the reaction D-methionine(out) + ATP + H2O = D-methionine(in) + ADP + phosphate + H(+). Part of the ABC transporter complex MetNIQ involved in methionine import. Responsible for energy coupling to the transport system. In Streptomyces coelicolor (strain ATCC BAA-471 / A3(2) / M145), this protein is Methionine import ATP-binding protein MetN.